Consider the following 1049-residue polypeptide: Retinoblastoma-like protein 1 (1049 aa).

Phosphothreonine is present on residues Thr332, Thr369, and Thr385. The interval 385–584 is domain A; the sequence is TPVASATQSV…WEALRASANK (200 aa). Positions 385-944 are pocket; binds T and E1A; the sequence is TPVASATQSV…GRVKSFALKY (560 aa). Residues 585–779 are spacer; that stretch reads VPSCEEVIFP…TQDAPLTGIS (195 aa). 4 positions are modified to phosphoserine: Ser640, Ser650, Ser748, and Ser761. The tract at residues 780–944 is domain B; that stretch reads KPKRTGSLAL…GRVKSFALKY (165 aa). Phosphoserine is present on residues Ser959, Ser970, and Ser983. Phosphothreonine is present on Thr992. Phosphoserine occurs at positions 1004 and 1022.

It belongs to the retinoblastoma protein (RB) family. As to quaternary structure, component of the DREAM complex (also named LINC complex) at least composed of E2F4, E2F5, LIN9, LIN37, LIN52, LIN54, MYBL1, MYBL2, RBL1, RBL2, RBBP4, TFDP1 and TFDP2. The complex exists in quiescent cells where it represses cell cycle-dependent genes. It dissociates in S phase when LIN9, LIN37, LIN52 and LIN54 form a subcomplex that binds to MYBL2. Interacts with AATF. Interacts with KDM5A. Interacts with KMT5B and KMT5C. Interacts with USP4. Interacts with RBBP9. Cell-cycle arrest properties are inactivated by phosphorylation on Thr-332, Ser-640, Ser-959 and Ser-970 by CDK4.

It localises to the nucleus. Key regulator of entry into cell division. Directly involved in heterochromatin formation by maintaining overall chromatin structure and, in particular, that of constitutive heterochromatin by stabilizing histone methylation. Recruits and targets histone methyltransferases KMT5B and KMT5C, leading to epigenetic transcriptional repression. Controls histone H4 'Lys-20' trimethylation. Probably acts as a transcription repressor by recruiting chromatin-modifying enzymes to promoters. Potent inhibitor of E2F-mediated trans-activation. May act as a tumor suppressor. The chain is Retinoblastoma-like protein 1 from Rattus norvegicus (Rat).